Reading from the N-terminus, the 122-residue chain is Large ribosomal subunit protein uL14c (122 aa).

This sequence belongs to the universal ribosomal protein uL14 family. Part of the 50S ribosomal subunit.

The protein resides in the plastid. Its function is as follows. Binds to 23S rRNA. The protein is Large ribosomal subunit protein uL14c of Cuscuta exaltata (Tall dodder).